The sequence spans 337 residues: Dihydroorotate dehydrogenase (quinone) (337 aa).

Residues 62 to 66 and Thr-86 contribute to the FMN site; that span reads AGLDK. Lys-66 contributes to the substrate binding site. 111–115 contributes to the substrate binding site; it reads NRFGF. Residues Asn-139 and Asn-172 each coordinate FMN. Asn-172 contributes to the substrate binding site. The active-site Nucleophile is Ser-175. Asn-177 contributes to the substrate binding site. FMN contacts are provided by Lys-217 and Thr-245. 246–247 serves as a coordination point for substrate; it reads NT. FMN-binding positions include Gly-268, Gly-297, and 318–319; that span reads YS.

This sequence belongs to the dihydroorotate dehydrogenase family. Type 2 subfamily. In terms of assembly, monomer. FMN serves as cofactor.

The protein localises to the cell membrane. The catalysed reaction is (S)-dihydroorotate + a quinone = orotate + a quinol. It participates in pyrimidine metabolism; UMP biosynthesis via de novo pathway; orotate from (S)-dihydroorotate (quinone route): step 1/1. Catalyzes the conversion of dihydroorotate to orotate with quinone as electron acceptor. In Methylobacillus flagellatus (strain ATCC 51484 / DSM 6875 / VKM B-1610 / KT), this protein is Dihydroorotate dehydrogenase (quinone).